The following is a 660-amino-acid chain: Arginine--tRNA ligase, cytoplasmic (660 aa).

Met-1 carries the post-translational modification N-acetylmethionine. The interval 1-72 (MDALVAHCSA…QAERNKPTKT (72 aa)) is could be involved in the assembly of the multisynthetase complex. L-arginine-binding positions include 200 to 202 (SPN), His-211, Tyr-384, Asp-388, and Gln-412. Residues 201-212 (PNIAKEMHVGHL) carry the 'HIGH' region motif. The interval 529 to 543 (NTAAYLLYAFTRIRS) is interaction with tRNA.

The protein belongs to the class-I aminoacyl-tRNA synthetase family. As to quaternary structure, interacts (via N-terminus) with AIMP1 (via N-terminus); this stimulates its catalytic activity. Interacts (via N-terminus) with LARS2 (via C-terminus). Monomer. Part of a multisubunit complex that groups tRNA ligases for Arg (RARS1), Asp (DARS1), Gln (QARS1), Ile (IARS1), Leu (LARS1), Lys (KARS1), Met (MARS1) the bifunctional ligase for Glu and Pro (EPRS1) and the auxiliary subunits AIMP1/p43, AIMP2/p38 and EEF1E1/p18. Interacts with QARS1. Part of a complex composed of RARS1, QARS1 and AIMP1.

It localises to the cytoplasm. The protein resides in the cytosol. The catalysed reaction is tRNA(Arg) + L-arginine + ATP = L-arginyl-tRNA(Arg) + AMP + diphosphate. Its function is as follows. Forms part of a macromolecular complex that catalyzes the attachment of specific amino acids to cognate tRNAs during protein synthesis. Modulates the secretion of AIMP1 and may be involved in generation of the inflammatory cytokine EMAP2 from AIMP1. The chain is Arginine--tRNA ligase, cytoplasmic (RARS1) from Bos taurus (Bovine).